The following is a 218-amino-acid chain: Small ribosomal subunit protein uS3 (218 aa).

The region spanning 38–106 (IRKYIESKLA…RVHINIVEIK (69 aa)) is the KH type-2 domain.

Belongs to the universal ribosomal protein uS3 family. Part of the 30S ribosomal subunit. Forms a tight complex with proteins S10 and S14.

Binds the lower part of the 30S subunit head. Binds mRNA in the 70S ribosome, positioning it for translation. The polypeptide is Small ribosomal subunit protein uS3 (Ligilactobacillus salivarius (strain UCC118) (Lactobacillus salivarius)).